The primary structure comprises 152 residues: Small ribosomal subunit protein bS16 (152 aa).

The segment at 84–152 (WKWEASNNPQ…EAAAEEEKSE (69 aa)) is disordered. The segment covering 97-123 (PGQKAKELAAEKAEKEADRKAAEEEAK) has biased composition (basic and acidic residues). The segment covering 124–144 (AAAAAPAAEEAPAEEAPAAEA) has biased composition (low complexity).

It belongs to the bacterial ribosomal protein bS16 family.

In Maricaulis maris (strain MCS10) (Caulobacter maris), this protein is Small ribosomal subunit protein bS16.